Here is a 318-residue protein sequence, read N- to C-terminus: Methionyl-tRNA formyltransferase (318 aa).

112 to 115 (SILP) is a (6S)-5,6,7,8-tetrahydrofolate binding site.

This sequence belongs to the Fmt family.

The enzyme catalyses L-methionyl-tRNA(fMet) + (6R)-10-formyltetrahydrofolate = N-formyl-L-methionyl-tRNA(fMet) + (6S)-5,6,7,8-tetrahydrofolate + H(+). In terms of biological role, attaches a formyl group to the free amino group of methionyl-tRNA(fMet). The formyl group appears to play a dual role in the initiator identity of N-formylmethionyl-tRNA by promoting its recognition by IF2 and preventing the misappropriation of this tRNA by the elongation apparatus. This chain is Methionyl-tRNA formyltransferase, found in Shewanella baltica (strain OS195).